Reading from the N-terminus, the 108-residue chain is Iron-sulfur cluster assembly protein CyaY (108 aa).

It belongs to the frataxin family.

Functionally, involved in iron-sulfur (Fe-S) cluster assembly. May act as a regulator of Fe-S biogenesis. The chain is Iron-sulfur cluster assembly protein CyaY from Pseudomonas paraeruginosa (strain DSM 24068 / PA7) (Pseudomonas aeruginosa (strain PA7)).